Reading from the N-terminus, the 391-residue chain is Formate-dependent phosphoribosylglycinamide formyltransferase (391 aa).

N(1)-(5-phospho-beta-D-ribosyl)glycinamide contacts are provided by residues 20–21 and Glu80; that span reads EL. ATP-binding positions include Arg112, Lys153, 158–163, 193–196, and Glu201; these read SSGKGQ and EGFV. The 190-residue stretch at 117 to 306 folds into the ATP-grasp domain; sequence RLAAEELQLP…EFALHVRAFT (190 aa). The Mg(2+) site is built by Glu265 and Glu277. Residues Asp284, Lys354, and 361 to 362 each bind N(1)-(5-phospho-beta-D-ribosyl)glycinamide; that span reads RR.

The protein belongs to the PurK/PurT family. In terms of assembly, homodimer.

It catalyses the reaction N(1)-(5-phospho-beta-D-ribosyl)glycinamide + formate + ATP = N(2)-formyl-N(1)-(5-phospho-beta-D-ribosyl)glycinamide + ADP + phosphate + H(+). It functions in the pathway purine metabolism; IMP biosynthesis via de novo pathway; N(2)-formyl-N(1)-(5-phospho-D-ribosyl)glycinamide from N(1)-(5-phospho-D-ribosyl)glycinamide (formate route): step 1/1. In terms of biological role, involved in the de novo purine biosynthesis. Catalyzes the transfer of formate to 5-phospho-ribosyl-glycinamide (GAR), producing 5-phospho-ribosyl-N-formylglycinamide (FGAR). Formate is provided by PurU via hydrolysis of 10-formyl-tetrahydrofolate. This is Formate-dependent phosphoribosylglycinamide formyltransferase from Aliivibrio fischeri (strain ATCC 700601 / ES114) (Vibrio fischeri).